The chain runs to 111 residues: Small ribosomal subunit protein uS17 (111 aa).

It belongs to the universal ribosomal protein uS17 family. As to quaternary structure, part of the 30S ribosomal subunit.

In terms of biological role, one of the primary rRNA binding proteins, it binds specifically to the 5'-end of 16S ribosomal RNA. This Methanocella arvoryzae (strain DSM 22066 / NBRC 105507 / MRE50) protein is Small ribosomal subunit protein uS17.